The primary structure comprises 281 residues: 2-hydroxymuconate semialdehyde hydrolase (281 aa).

The segment at 30 to 55 (FPALLIHGSGPASPPGPTGAGSFRSS) is disordered. Residues 31–261 (PALLIHGSGP…QCGHWTQIEH (231 aa)) enclose the AB hydrolase-1 domain. Active-site residues include Ser-106, Asp-227, and His-255.

It belongs to the DmpD/TodF/XylF esterase family.

It carries out the reaction (2Z,4E)-2-hydroxy-6-oxohexa-2,4-dienoate + H2O = 2-oxopent-4-enoate + formate + H(+). It functions in the pathway aromatic compound metabolism; benzoate degradation via hydroxylation. Its function is as follows. Catalyzes the conversion of 2-hydroxymuconate semialdehyde to 2-hydroxypent-2,4-dienoate. The protein is 2-hydroxymuconate semialdehyde hydrolase (xylF) of Pseudomonas putida (Arthrobacter siderocapsulatus).